A 224-amino-acid chain; its full sequence is Charged multivesicular body protein 4b (224 aa).

Residues 1–23 form a disordered region; the sequence is MSVFGKLFGAGGGKAGKGGPTPQ. Serine 2 is subject to N-acetylserine. Lysine 6 carries the N6-acetyllysine modification. Over residues 8–19 the composition is skewed to gly residues; sequence FGAGGGKAGKGG. Positions 23 to 183 form a coiled coil; that stretch reads QEAIQRLRDT…EELDKNLLEI (161 aa). At lysine 114 the chain carries N6-acetyllysine. Phosphoserine occurs at positions 184 and 223. The disordered stretch occupies residues 185–224; it reads GPETVPLPNVPSIALPSKPAKKKEEEDDDMKELENWAGSM.

It belongs to the SNF7 family. As to quaternary structure, probable core component of the endosomal sorting required for transport complex III (ESCRT-III). ESCRT-III components are thought to multimerize to form a flat lattice on the perimeter membrane of the endosome. Several assembly forms of ESCRT-III may exist that interact and act sequentially. Interacts with CHMP6 and CHMP4C. Interacts with PDCD6IP; the interaction is direct. Interacts with VPS4A; the interaction is direct. Interacts with VPS4B; the interaction is direct. Interacts with CHMP7. Interacts with CFTR; the interaction requires misfolded CFTR. Interacts with PTPN23. Interacts with CC2D1B. Post-translationally, ISGylated. Isgylation weakens its interaction with VPS4A. Widely expressed. Expressed at higher level in heart and skeletal muscle. Also expressed in brain, colon, thymus, spleen, kidney, liver, small intestine, placenta, lung and peripheral blood lymphocytes.

The protein resides in the cytoplasm. The protein localises to the cytosol. Its subcellular location is the late endosome membrane. It localises to the midbody. It is found in the nucleus envelope. In terms of biological role, probable core component of the endosomal sorting required for transport complex III (ESCRT-III) which is involved in multivesicular bodies (MVBs) formation and sorting of endosomal cargo proteins into MVBs. MVBs contain intraluminal vesicles (ILVs) that are generated by invagination and scission from the limiting membrane of the endosome and mostly are delivered to lysosomes enabling degradation of membrane proteins, such as stimulated growth factor receptors, lysosomal enzymes and lipids. The MVB pathway appears to require the sequential function of ESCRT-O, -I,-II and -III complexes. ESCRT-III proteins mostly dissociate from the invaginating membrane before the ILV is released. The ESCRT machinery also functions in topologically equivalent membrane fission events, such as the terminal stages of cytokinesis. Together with SPAST, the ESCRT-III complex promotes nuclear envelope sealing and mitotic spindle disassembly during late anaphase. Plays a role in the endosomal sorting pathway. ESCRT-III proteins are believed to mediate the necessary vesicle extrusion and/or membrane fission activities, possibly in conjunction with the AAA ATPase VPS4. When overexpressed, membrane-assembled circular arrays of CHMP4B filaments can promote or stabilize negative curvature and outward budding. CHMP4A/B/C are required for the exosomal release of SDCBP, CD63 and syndecan. Majority of the protein exists in a folded closed conformation. Its function is as follows. (Microbial infection) The ESCRT machinery also functions in topologically equivalent membrane fission events, such as the budding of enveloped viruses (HIV-1 and other lentiviruses). Via its interaction with PDCD6IP involved in HIV-1 p6- and p9-dependent virus release. In Homo sapiens (Human), this protein is Charged multivesicular body protein 4b (CHMP4B).